We begin with the raw amino-acid sequence, 131 residues long: MSIQYTTVGDLKVGSYVMIDGEPCRVVEITKAKTGKHGSAKANVVAIGLFTGQKRSLMAPVDQQVEVPIIEKHVGQILADKGDNLTIMDLESYETFDLEKPTENEIVSKIRPGAEIEYWSVMGRRKIVRVK.

A Hypusine modification is found at Lys-36.

It belongs to the eIF-5A family. In terms of processing, the N-terminus is blocked.

The protein resides in the cytoplasm. In terms of biological role, functions by promoting the formation of the first peptide bond. The polypeptide is Translation initiation factor 5A (eif5a) (Sulfolobus acidocaldarius (strain ATCC 33909 / DSM 639 / JCM 8929 / NBRC 15157 / NCIMB 11770)).